The following is a 185-amino-acid chain: Tumor necrosis factor receptor superfamily member 17 (185 aa).

At 1 to 49 the chain is on the extracellular side; the sequence is MAQQCFHSEYFDSLLHACKPCHLRCSNPPATCQPYCDPSVTSSVKGTYT. Residues 4–36 form a TNFR-Cys repeat; sequence QCFHSEYFDSLLHACKPCHLRCSNPPATCQPYC. 3 disulfide bridges follow: C5/C18, C21/C32, and C25/C36. The chain crosses the membrane as a helical; Signal-anchor for type III membrane protein span at residues 50–70; the sequence is VLWIFLGLTLVLSLALFTISF. Over 71–185 the chain is Cytoplasmic; sequence LLRKMNPEAL…MGMEKPTHTR (115 aa).

Associates with TRAF1, TRAF2, TRAF3, TRAF5 and TRAF6. As to expression, detected in spleen, thymus, bone marrow and heart, and at lower levels in kidney and lung.

It localises to the membrane. In terms of biological role, receptor for TNFSF13B/BLyS/BAFF and TNFSF13/APRIL. Promotes B-cell survival and plays a role in the regulation of humoral immunity. Activates NF-kappa-B and JNK. The protein is Tumor necrosis factor receptor superfamily member 17 (Tnfrsf17) of Mus musculus (Mouse).